Reading from the N-terminus, the 309-residue chain is Probable manganese-dependent inorganic pyrophosphatase (309 aa).

Residues His-9, Asp-13, Asp-15, Asp-75, His-97, and Asp-149 each contribute to the Mn(2+) site.

Belongs to the PPase class C family. It depends on Mn(2+) as a cofactor.

Its subcellular location is the cytoplasm. The enzyme catalyses diphosphate + H2O = 2 phosphate + H(+). In Staphylococcus aureus (strain COL), this protein is Probable manganese-dependent inorganic pyrophosphatase.